The following is a 261-amino-acid chain: tRNA pseudouridine synthase A (261 aa).

Catalysis depends on Asp51, which acts as the Nucleophile. Tyr109 provides a ligand contact to substrate.

Belongs to the tRNA pseudouridine synthase TruA family. Homodimer.

The enzyme catalyses uridine(38/39/40) in tRNA = pseudouridine(38/39/40) in tRNA. Its function is as follows. Formation of pseudouridine at positions 38, 39 and 40 in the anticodon stem and loop of transfer RNAs. In Idiomarina loihiensis (strain ATCC BAA-735 / DSM 15497 / L2-TR), this protein is tRNA pseudouridine synthase A.